We begin with the raw amino-acid sequence, 379 residues long: 1-deoxy-D-xylulose 5-phosphate reductoisomerase (379 aa).

Thr-10, Gly-11, Ser-12, Ile-13, Gly-36, Asn-38, and Asn-121 together coordinate NADPH. Lys-122 contributes to the 1-deoxy-D-xylulose 5-phosphate binding site. Glu-123 is a binding site for NADPH. Residue Asp-147 coordinates Mn(2+). Residues Ser-148, Glu-149, Ser-173, and His-196 each coordinate 1-deoxy-D-xylulose 5-phosphate. Glu-149 is a Mn(2+) binding site. Gly-202 is a binding site for NADPH. 1-deoxy-D-xylulose 5-phosphate-binding residues include Ser-209, Asn-214, Lys-215, and Glu-218. Glu-218 contacts Mn(2+).

It belongs to the DXR family. It depends on Mg(2+) as a cofactor. The cofactor is Mn(2+).

The catalysed reaction is 2-C-methyl-D-erythritol 4-phosphate + NADP(+) = 1-deoxy-D-xylulose 5-phosphate + NADPH + H(+). It participates in isoprenoid biosynthesis; isopentenyl diphosphate biosynthesis via DXP pathway; isopentenyl diphosphate from 1-deoxy-D-xylulose 5-phosphate: step 1/6. Catalyzes the NADPH-dependent rearrangement and reduction of 1-deoxy-D-xylulose-5-phosphate (DXP) to 2-C-methyl-D-erythritol 4-phosphate (MEP). In Shouchella clausii (strain KSM-K16) (Alkalihalobacillus clausii), this protein is 1-deoxy-D-xylulose 5-phosphate reductoisomerase.